The primary structure comprises 94 residues: Small polypeptide ROTUNDIFOLIA LIKE 1 (94 aa).

Over residues 1–13 (MRQCASASSSTSR) the composition is skewed to polar residues. The disordered stretch occupies residues 1 to 26 (MRQCASASSSTSRPPEAAGEEGKRRR). Residues 28–59 (RRGWLLQAAAREQRSRFYIFRRCVAMLLCWYK) form a required for DVL/RTFL small polypeptide activity region. The helical transmembrane segment at 63–82 (ITPYNVVPLGIYGLVWFATM) threads the bilayer.

Belongs to the DVL/RTFL small polypeptides family.

It localises to the cell membrane. Small polypeptide acting as a regulatory molecule which coordinates cellular responses required for differentiation, growth and development, probably by restricting polar cell proliferation in lateral organs. This chain is Small polypeptide ROTUNDIFOLIA LIKE 1, found in Oryza sativa subsp. japonica (Rice).